The sequence spans 626 residues: Lipoprotein LpqB (626 aa).

Positions 1–23 are cleaved as a signal peptide; that stretch reads MIGQANRIAAAVSTACLAVLLAG. Cys24 is lipidated: N-palmitoyl cysteine. Cys24 is lipidated: S-diacylglycerol cysteine. The interval 428–457 is disordered; the sequence is EAEREEDLADDTEPGDTAVGSTERRETDRG. The segment covering 430–441 has biased composition (acidic residues); sequence EREEDLADDTEP.

Belongs to the LpqB lipoprotein family.

It is found in the cell membrane. This Thermobifida fusca (strain YX) protein is Lipoprotein LpqB.